A 279-amino-acid polypeptide reads, in one-letter code: Digeranylgeranylglyceryl phosphate synthase (279 aa).

The next 8 membrane-spanning stretches (helical) occupy residues 5–25 (GFFA…AIVA), 27–47 (LIAT…VLLV), 90–110 (FLLG…IALV), 127–147 (FFGN…GGAY), 148–168 (AGWH…LAML), 198–218 (KTAL…AVPY), 219–239 (LWWG…ILFA), and 259–279 (TLLK…AVFL).

This sequence belongs to the UbiA prenyltransferase family. DGGGP synthase subfamily. It depends on Mg(2+) as a cofactor.

The protein resides in the cell membrane. It carries out the reaction sn-3-O-(geranylgeranyl)glycerol 1-phosphate + (2E,6E,10E)-geranylgeranyl diphosphate = 2,3-bis-O-(geranylgeranyl)-sn-glycerol 1-phosphate + diphosphate. It participates in membrane lipid metabolism; glycerophospholipid metabolism. Prenyltransferase that catalyzes the transfer of the geranylgeranyl moiety of geranylgeranyl diphosphate (GGPP) to the C2 hydroxyl of (S)-3-O-geranylgeranylglyceryl phosphate (GGGP). This reaction is the second ether-bond-formation step in the biosynthesis of archaeal membrane lipids. The protein is Digeranylgeranylglyceryl phosphate synthase of Methanoregula boonei (strain DSM 21154 / JCM 14090 / 6A8).